The primary structure comprises 275 residues: Large ribosomal subunit protein uL2c (275 aa).

Residues 224–263 (VMNPVDHPHGGGEGRAPIGRKRPLTPWGRPALGKKSRKNH) are disordered.

The protein belongs to the universal ribosomal protein uL2 family. Part of the 50S ribosomal subunit.

The protein localises to the plastid. It localises to the chloroplast. The protein is Large ribosomal subunit protein uL2c (rpl2) of Chaetosphaeridium globosum (Charophycean green alga).